Consider the following 1511-residue polypeptide: Bifunctional glutamate/proline--tRNA ligase (1511 aa).

Positions 164–758 (GTKWDVSENK…SSVLYNRVAA (595 aa)) are glutamate--tRNA ligase. The 'HIGH' region signature appears at 204-214 (PEASGYLHIGH). The tract at residues 296–315 (AEQMKAEREQRAESKHRQNS) is disordered. The span at 299–315 (MKAEREQRAESKHRQNS) shows a compositional bias: basic and acidic residues. Lysine 300 carries the post-translational modification N6-acetyllysine; alternate. The residue at position 300 (lysine 300) is an N6-malonyllysine; alternate. Residue threonine 355 is modified to Phosphothreonine. Position 417 is an N6-acetyllysine (lysine 417). Residues 432–436 (VLSKR) carry the 'KMSKS' region motif. Position 434 is a phosphoserine (serine 434). An N6-acetyllysine mark is found at lysine 498, lysine 535, lysine 542, and lysine 637. The span at 708–728 (KEMPTSGSKEKTKAEPLKKET) shows a compositional bias: basic and acidic residues. Positions 708 to 741 (KEMPTSGSKEKTKAEPLKKETSSAPKEGPVPAVS) are disordered. The residue at position 746 (serine 746) is a Phosphoserine. A WHEP-TRS 1 domain is found at 748 to 804 (ESSVLYNRVAAQGDVVRELKAKKAAKEDVDAAVKQLLALKAEYKQKTGQEYKPGNPP). The 3 X 57 AA approximate repeats stretch occupies residues 759 to 955 (QGDVVRELKA…GIEYKPVSAT (197 aa)). Lysine 787 bears the N6-acetyllysine mark. The disordered stretch occupies residues 794–823 (TGQEYKPGNPPSAAAQSASTKSLPSAGEDR). A compositionally biased stretch (polar residues) spans 807 to 816 (AAQSASTKSL). Residues 821-877 (EDRSLYDKIAAQGEVVRKLKAEKAPKAKVTEAVECLLSLKAEYKEKTGKEYVPGQPP) enclose the WHEP-TRS 2 domain. Lysine 860 bears the N6-acetyllysine mark. Disordered regions lie at residues 868–903 (GKEY…AKAL) and 952–1015 (VSAT…RLGL). Position 871 is a phosphotyrosine (tyrosine 871). Positions 877-890 (PASQKSQPSPASKA) are enriched in low complexity. Serine 885 is modified (phosphoserine; by CDK5). The residue at position 897 (threonine 897) is a Phosphothreonine. The 57-residue stretch at 899 to 955 (EAKALFDRVACQGEVVRKLKAEKASKDQVDPAVQELLQLKAQYKSLTGIEYKPVSAT) folds into the WHEP-TRS 3 domain. Residues 957–975 (SEDKDKKKKEKENKSEKQN) are compositionally biased toward basic and acidic residues. A compositionally biased stretch (gly residues) spans 992 to 1005 (QGGGLSSSGAGEGQ). At serine 997 the chain carries Phosphoserine. Phosphoserine; by RPS6KB1 is present on serine 998. Serine 999 bears the Phosphoserine mark. The proline--tRNA ligase stretch occupies residues 1006–1511 (GPKKQTRLGL…KFYTLFGRSY (506 aa)). Residues 1120–1122 (TSE) and arginine 1151 contribute to the L-proline site. 6 residues coordinate ATP: arginine 1151, glutamate 1153, arginine 1162, threonine 1163, glutamine 1236, and threonine 1239. Arginine 1151 is subject to Omega-N-methylarginine. Mg(2+) is bound at residue glutamine 1236. Histidine 1241 provides a ligand contact to L-proline. Threonine 1275 and arginine 1277 together coordinate ATP. Serine 1349 carries the phosphoserine modification. Cysteine 1447, cysteine 1452, cysteine 1494, and cysteine 1496 together coordinate Zn(2+). Lysine 1502 carries the N6-acetyllysine modification.

The protein in the N-terminal section; belongs to the class-I aminoacyl-tRNA synthetase family. Glutamate--tRNA ligase type 2 subfamily. This sequence in the C-terminal section; belongs to the class-II aminoacyl-tRNA synthetase family. As to quaternary structure, homodimer. Part of the aminoacyl-tRNA synthetase multienzyme complex, also know as multisynthetase complex, that is composed of the tRNA ligases for Arg (RARS1), Asp (DARS1), Gln (QARS1), Ile (IARS1), Leu (LARS1), Lys (KARS1), Met (MARS1) the bifunctional ligase for Glu and Pro (EPRS1) and the auxiliary subunits AIMP1/p43, AIMP2/p38 and EEF1E1/p18. Forms a linear complex that contains MARS1, EEF1E1, EPRS1 and AIMP2 that is at the core of the multisubunit complex. Interacts with TARS3. Interacts with DUS2L. Component of the GAIT complex which is composed of EPRS1, RPL13A and GAPDH. Interacts (phosphorylated at Ser-998) with SLC27A1; mediates the translocation of SLC27A1 from the cytoplasm to the plasma membrane thereby increasing the uptake of long-chain fatty acids. Post-translationally, phosphorylated at Ser-998 by RPS6KB1; triggers EPRS1 release from the aminoacyl-tRNA synthetase multienzyme complex. In monocytes, the IFN-gamma-induced phosphorylation at Ser-998 releases EPRS1 from the aminoacyl-tRNA synthetase multienzyme complex, allowing its association with the GAIT complex. Phosphorylation at Ser-998 is specifically required for the RPL13A-mediated interaction of the GAIT complex with eIF4G. Phosphorylation at Ser-998 by RPS6KB1, is also induced by insulin through activation of the mTORC1 signaling pathway and promotes the interaction of EPRS1 with SLC27A1.

It localises to the cytoplasm. Its subcellular location is the cytosol. It is found in the membrane. It carries out the reaction tRNA(Glu) + L-glutamate + ATP = L-glutamyl-tRNA(Glu) + AMP + diphosphate. The catalysed reaction is tRNA(Pro) + L-proline + ATP = L-prolyl-tRNA(Pro) + AMP + diphosphate. Its function is as follows. Multifunctional protein which primarily functions within the aminoacyl-tRNA synthetase multienzyme complex, also known as multisynthetase complex. Within the complex it catalyzes the attachment of both L-glutamate and L-proline to their cognate tRNAs in a two-step reaction where the amino acid is first activated by ATP to form a covalent intermediate with AMP. Subsequently, the activated amino acid is transferred to the acceptor end of the cognate tRNA to form L-glutamyl-tRNA(Glu) and L-prolyl-tRNA(Pro). Upon interferon-gamma stimulation, EPRS1 undergoes phosphorylation, causing its dissociation from the aminoacyl-tRNA synthetase multienzyme complex. It is recruited to form the GAIT complex, which binds to stem loop-containing GAIT elements found in the 3'-UTR of various inflammatory mRNAs, such as ceruloplasmin. The GAIT complex inhibits the translation of these mRNAs, allowing interferon-gamma to redirect the function of EPRS1 from protein synthesis to translation inhibition in specific cell contexts. Furthermore, it can function as a downstream effector in the mTORC1 signaling pathway, by promoting the translocation of SLC27A1 from the cytoplasm to the plasma membrane where it mediates the uptake of long-chain fatty acid by adipocytes. Thereby, EPRS1 also plays a role in fat metabolism and more indirectly influences lifespan. The polypeptide is Bifunctional glutamate/proline--tRNA ligase (Cricetulus griseus (Chinese hamster)).